The sequence spans 471 residues: Secretogranin-3 (471 aa).

The signal sequence occupies residues 1–22 (MGFLWTGSWILVLVLNSGPIQA). Disordered regions lie at residues 24–45 (PKPE…ERPL), 89–108 (TVEK…QLNV), and 345–404 (KLEK…TDEA). A compositionally biased stretch (basic and acidic residues) spans 28–45 (GSQDKSLHNRELSAERPL). Ser40 carries the phosphoserine modification. The O-linked (Xyl...) (chondroitin sulfate) serine glycan is linked to Ser40. Composition is skewed to basic and acidic residues over residues 345 to 355 (KLEKNTTDSKS) and 364 to 404 (KSQE…TDEA). Phosphoserine is present on Ser365.

In terms of assembly, interacts with CHGA. Interacts with secretogranin II/SCG2. Interacts (via C-terminus) with CPE. Expressed in various brain areas, with highest levels in the arcuate nucleus and the lateral hypothalamic area, as well as the paraventricular nucleus and the ventromedial hypothalamus (at protein level).

The protein resides in the cytoplasmic vesicle. It is found in the secretory vesicle. It localises to the secretory vesicle membrane. Its subcellular location is the secreted. Its function is as follows. Member of the granin protein family that regulates the biogenesis of secretory granules. Acts as a sorting receptor for intragranular proteins including chromogranin A/CHGA. May also play a role in angiogenesis. Promotes endothelial proliferation, migration and tube formation through MEK/ERK signaling pathway. The protein is Secretogranin-3 (Scg3) of Mus musculus (Mouse).